A 503-amino-acid chain; its full sequence is MALWAKARVWMAGPWLSLHRARPLGTRASAAPKAVLPFEAMPRCPGNKWMRVLQIWKEQGSENMHLDMHQTFQELGPIFRYDVGGRHMVFVMLPEDVERLQQAESLHPQRMLLEPWLAYRQARGHKCGVFLLNGPQWRLDRLRLNPDVLSLPALQKYTPLVDGVARDFSQTLKARVLQNARGSLTLDIAPSVFRYTIEASTLVLYGERLGLLTQQPNPDSLNFIHALEAMFKSTVQLMFVPRRLSRWTSSSMWREHFEAWDYIFQYANRAIQRIYQELALGHPWHYSGIVAELLMRADMTLDTIKANTIDLTAGSVDTTAFPLLMTLFELARNPEVQQALRQESLVAEARISENPQRATTELPLLRAALKETLRLYPVGITLERQVSSDLVLQNYHIPAGTLVKVLLYSLGRNPAVFARPESYHPQRWLDRQGSGSRFPHLAFGFGMRQCLGRRVAEVEMLLLLHHVLKNFLVETLAQEDIKMVYRFILMPSTLPLFTFRAIQ.

The N-terminal 24 residues, 1 to 24 (MALWAKARVWMAGPWLSLHRARPL), are a transit peptide targeting the mitochondrion. Residue cysteine 450 participates in heme binding.

It belongs to the cytochrome P450 family. Requires heme as cofactor.

The protein localises to the mitochondrion inner membrane. It carries out the reaction a steroid + 2 reduced [adrenodoxin] + O2 + 2 H(+) = an 11beta-hydroxysteroid + 2 oxidized [adrenodoxin] + H2O. The catalysed reaction is 11-deoxycortisol + 2 reduced [adrenodoxin] + O2 + 2 H(+) = cortisol + 2 oxidized [adrenodoxin] + H2O. The enzyme catalyses 21-hydroxyprogesterone + 2 reduced [adrenodoxin] + O2 + 2 H(+) = corticosterone + 2 oxidized [adrenodoxin] + H2O. It catalyses the reaction corticosterone + 2 reduced [adrenodoxin] + O2 + 2 H(+) = 18-hydroxycorticosterone + 2 oxidized [adrenodoxin] + H2O. It carries out the reaction 18-hydroxycorticosterone + 2 reduced [adrenodoxin] + O2 + 2 H(+) = aldosterone + 2 oxidized [adrenodoxin] + 2 H2O. The catalysed reaction is 21-hydroxyprogesterone + 2 reduced [adrenodoxin] + O2 + 2 H(+) = 19-hydroxy-11-deoxycorticosterone + 2 oxidized [adrenodoxin] + H2O. The enzyme catalyses 19-hydroxy-11-deoxycorticosterone + 2 reduced [adrenodoxin] + O2 + 2 H(+) = 19-oxo-11-deoxycorticosterone + 2 oxidized [adrenodoxin] + 2 H2O. Its pathway is steroid biosynthesis; glucocorticoid biosynthesis. It functions in the pathway steroid hormone biosynthesis. A cytochrome P450 monooxygenase that catalyzes the biosynthesis of aldosterone and other adrenal corticoids. Differing from other species (such as human, rat and mice), it is able to catalyze three sequential oxidative reactions of 11-deoxycorticosterone (21-hydroxyprogesterone), namely 11-beta hydroxylation, followed by two successive oxidations at C18 yielding 18-hydroxy and then 18-oxo intermediates, and ending with the formation of aldosterone. Steroid 11beta, 18- and 19-hydroxylase. Mechanistically, uses molecular oxygen inserting one oxygen atom into a substrate and reducing the second into a water molecule. Two electrons are provided by NADPH via a two-protein mitochondrial transfer system comprising flavoprotein FDXR (adrenodoxin/ferredoxin reductase) and nonheme iron-sulfur protein FDX1 or FDX2 (adrenodoxin/ferredoxin). The protein is Cytochrome P450 11B1, mitochondrial (CYP11B1) of Ovis aries (Sheep).